A 281-amino-acid chain; its full sequence is Probable replication-associated protein repA1 (281 aa).

This sequence belongs to the IncFII RepA family.

Its function is as follows. This protein is essential for plasmid replication; it is involved in copy control functions. The protein is Probable replication-associated protein repA1 (repA1) of Buchnera aphidicola subsp. Cinara cedri (strain Cc).